Consider the following 250-residue polypeptide: MDEADPGEAEAAQAEAAQDGAAQDGAARDALLLLSWLSPGYPVGAYAYSHGLEWAAEAGDVRDEASLGAWLADVLSHGAARNDAILAAHAHGAGLAGDPRAAEALNDLALALAPSRELHLETSQQGRSFLDATVAAWPAPGLEALATRLPGPVAYPVAVGLAAGAHRIARRSLVTGYLSAFLQNQVSAALRLAPVGQSAGTRVVAALSPLVAALAAEAEGAPLDALGAATLRLDLGSFRHETQYSRIFRS.

The disordered stretch occupies residues 1–21; the sequence is MDEADPGEAEAAQAEAAQDGA. Residues 9-21 show a composition bias toward low complexity; it reads AEAAQAEAAQDGA.

It belongs to the UreF family. In terms of assembly, ureD, UreF and UreG form a complex that acts as a GTP-hydrolysis-dependent molecular chaperone, activating the urease apoprotein by helping to assemble the nickel containing metallocenter of UreC. The UreE protein probably delivers the nickel.

It localises to the cytoplasm. In terms of biological role, required for maturation of urease via the functional incorporation of the urease nickel metallocenter. The chain is Urease accessory protein UreF from Methylobacterium sp. (strain 4-46).